The chain runs to 274 residues: Diaminopimelate epimerase (274 aa).

Substrate is bound by residues Asn11, Gln44, and Asn64. Cys73 (proton donor) is an active-site residue. Residues 74-75 (GN), Asn157, Asn190, and 208-209 (ER) each bind substrate. The active-site Proton acceptor is the Cys217. 218–219 (GS) is a binding site for substrate.

Belongs to the diaminopimelate epimerase family. In terms of assembly, homodimer.

The protein localises to the cytoplasm. It carries out the reaction (2S,6S)-2,6-diaminopimelate = meso-2,6-diaminopimelate. It participates in amino-acid biosynthesis; L-lysine biosynthesis via DAP pathway; DL-2,6-diaminopimelate from LL-2,6-diaminopimelate: step 1/1. Functionally, catalyzes the stereoinversion of LL-2,6-diaminopimelate (L,L-DAP) to meso-diaminopimelate (meso-DAP), a precursor of L-lysine and an essential component of the bacterial peptidoglycan. This chain is Diaminopimelate epimerase, found in Histophilus somni (strain 2336) (Haemophilus somnus).